Reading from the N-terminus, the 188-residue chain is dCTP deaminase (188 aa).

Residues 111-116 (KSTYAR), 135-137 (TLE), Gln-156, Tyr-170, Lys-179, and Gln-180 each bind dCTP. Catalysis depends on Glu-137, which acts as the Proton donor/acceptor.

It belongs to the dCTP deaminase family. As to quaternary structure, homotrimer.

It carries out the reaction dCTP + H2O + H(+) = dUTP + NH4(+). It functions in the pathway pyrimidine metabolism; dUMP biosynthesis; dUMP from dCTP (dUTP route): step 1/2. Functionally, catalyzes the deamination of dCTP to dUTP. This is dCTP deaminase from Orientia tsutsugamushi (strain Ikeda) (Rickettsia tsutsugamushi).